A 397-amino-acid chain; its full sequence is Argininosuccinate synthase (397 aa).

9–17 (AYSGGLDTS) provides a ligand contact to ATP. Position 86 (Tyr86) interacts with L-citrulline. Gly116 lines the ATP pocket. L-aspartate is bound by residues Thr118, Asn122, and Asp123. Asn122 lines the L-citrulline pocket. L-citrulline contacts are provided by Arg126, Ser174, Glu259, and Tyr271.

It belongs to the argininosuccinate synthase family. Type 1 subfamily. In terms of assembly, homotetramer.

Its subcellular location is the cytoplasm. The enzyme catalyses L-citrulline + L-aspartate + ATP = 2-(N(omega)-L-arginino)succinate + AMP + diphosphate + H(+). It functions in the pathway amino-acid biosynthesis; L-arginine biosynthesis; L-arginine from L-ornithine and carbamoyl phosphate: step 2/3. This is Argininosuccinate synthase from Lactococcus lactis subsp. cremoris (strain SK11).